We begin with the raw amino-acid sequence, 258 residues long: MEMKKKINMELKNRAPEEVTELVLDNCLCVNGEIEGLNDTFKELEFLSMANVELSSLARLPSLNKLRKLELSDNIISGGLEVLAEKCPNLTYLNLSGNKIKDLSTVEALQNLKNLKSLDLFNCEITNLEDYRESIFELLQQITYLDGFDQEDNEAPDSEEEEEDEDGDEDEEDEEEDEAGPPEGYEDEDEDEDEAGSEVGEGEEEVGLSYLMKEEIQDEEDDDDYVDEGEEEEEEEEEGPRGEKRKRDAEDDGEEDDD.

Met-1 bears the N-acetylmethionine mark. 4 LRR repeats span residues 18 to 38, 43 to 64, 65 to 87, and 89 to 110; these read EVTE…EGLN, ELEF…PSLN, KLRK…AEKC, and NLTY…EALQ. Residue Lys-68 forms a Glycyl lysine isopeptide (Lys-Gly) (interchain with G-Cter in SUMO2) linkage. Positions 123 to 161 constitute an LRRCT domain; it reads CEITNLEDYRESIFELLQQITYLDGFDQEDNEAPDSEEE. Acidic residues-rich tracts occupy residues 149 to 206 and 216 to 238; these read DQED…EEEV and IQDE…EEEE. The disordered stretch occupies residues 149-258; sequence DQEDNEAPDS…AEDDGEEDDD (110 aa). Residues 205-258 form a ZID domain region; sequence EVGLSYLMKEEIQDEEDDDDYVDEGEEEEEEEEEGPRGEKRKRDAEDDGEEDDD. The span at 239–249 shows a compositional bias: basic and acidic residues; sequence GPRGEKRKRDA.

Belongs to the ANP32 family. In terms of assembly, component of a SWR1-like complex, composed of EP400, KAT5/TIP60, TRRAP, BRD8, RUVBL1, RUVBL2, ING3 and ANP32E; the complex does not contain SRCAP. Interacts with H2A.Z/H2AZ1. Interacts with the importin alpha KPNA1 and KPNA2. In terms of processing, phosphorylated. The phosphorylation is nuclear localization signal (NLS)-dependent.

It localises to the cytoplasm. The protein resides in the nucleus. In terms of biological role, histone chaperone that specifically mediates the genome-wide removal of histone H2A.Z/H2AZ1 from the nucleosome: removes H2A.Z/H2AZ1 from its normal sites of deposition, especially from enhancer and insulator regions. Not involved in deposition of H2A.Z/H2AZ1 in the nucleosome. May stabilize the evicted H2A.Z/H2AZ1-H2B dimer, thus shifting the equilibrium towards dissociation and the off-chromatin state. Inhibits activity of protein phosphatase 2A (PP2A). Does not inhibit protein phosphatase 1. May play a role in cerebellar development and synaptogenesis. This Rattus norvegicus (Rat) protein is Acidic leucine-rich nuclear phosphoprotein 32 family member E (Anp32e).